We begin with the raw amino-acid sequence, 61 residues long: Small ribosomal subunit protein uS14B (61 aa).

The Zn(2+) site is built by C24, C27, C40, and C43.

This sequence belongs to the universal ribosomal protein uS14 family. Zinc-binding uS14 subfamily. As to quaternary structure, part of the 30S ribosomal subunit. Contacts proteins S3 and S10. Zn(2+) is required as a cofactor.

Binds 16S rRNA, required for the assembly of 30S particles and may also be responsible for determining the conformation of the 16S rRNA at the A site. The chain is Small ribosomal subunit protein uS14B from Saccharopolyspora erythraea (strain ATCC 11635 / DSM 40517 / JCM 4748 / NBRC 13426 / NCIMB 8594 / NRRL 2338).